The chain runs to 523 residues: Calcium-dependent protein kinase 28 (523 aa).

Gly-2 carries N-myristoyl glycine lipidation. The S-palmitoyl cysteine moiety is linked to residue Cys-4. The tract at residues 15 to 43 (SSRRSSQTKSKAAPTPIDTKASTKRRTGS) is disordered. The Protein kinase domain maps to 62–322 (YTIGKLLGHG…AAQALSHAWV (261 aa)). ATP contacts are provided by residues 68–76 (LGHGQFGYT) and Lys-91. The Proton acceptor role is filled by Asp-188. 2 positions are modified to phosphoserine: Ser-228 and Ser-318. The segment at 328-358 (ATDIPVDISVLNNLRQFVRYSRLKQFALRAL) is autoinhibitory domain. EF-hand domains are found at residues 365–400 (AEIS…DLPW), 402–437 (LKDS…VHQL), 444–479 (KWQL…RGSI), and 482–509 (LLDE…ASIS). Positions 378, 380, 382, 389, 415, 417, 419, 426, 457, 459, 461, 463, 468, 487, 489, 491, and 493 each coordinate Ca(2+). At Ser-495 the chain carries Phosphoserine. Glu-498 is a binding site for Ca(2+). Ser-515 carries the phosphoserine modification.

It belongs to the protein kinase superfamily. Ser/Thr protein kinase family. CDPK subfamily. In terms of assembly, interacts with BIK1. In terms of tissue distribution, expressed in vascular and meristematic tissues throughout plant development.

The protein resides in the cell membrane. It catalyses the reaction L-seryl-[protein] + ATP = O-phospho-L-seryl-[protein] + ADP + H(+). It carries out the reaction L-threonyl-[protein] + ATP = O-phospho-L-threonyl-[protein] + ADP + H(+). Activated by calcium. Autophosphorylation plays an important role in the regulation of the kinase activity. In terms of biological role, may play a role in signal transduction pathways that involve calcium as a second messenger. Acts as a developmentally controlled regulator for coordinated stem elongation and vascular development. Acts as a key component which contributes to the developmental switch that establishes the transition from vegetative to reproductive growth. Involved in pathogen-associated molecular pattern (PAMP)-triggered immunity (PTI) signaling. Interacts with and phosphorylates the kinase BIK1, a central rate-limiting kinase in PTI signaling. Facilitates BIK1 turnover and negatively regulates BIK1-mediated immune responses triggered by several PAMPs. Its kinase activity is necessary and sufficient for its function in PTI signaling. The sequence is that of Calcium-dependent protein kinase 28 from Arabidopsis thaliana (Mouse-ear cress).